Consider the following 101-residue polypeptide: NADH-quinone oxidoreductase subunit K (101 aa).

3 consecutive transmembrane segments (helical) span residues valine 4–isoleucine 24, isoleucine 29–alanine 49, and phenylalanine 65–phenylalanine 85.

It belongs to the complex I subunit 4L family. NDH-1 is composed of 14 different subunits. Subunits NuoA, H, J, K, L, M, N constitute the membrane sector of the complex.

It localises to the cell inner membrane. The catalysed reaction is a quinone + NADH + 5 H(+)(in) = a quinol + NAD(+) + 4 H(+)(out). In terms of biological role, NDH-1 shuttles electrons from NADH, via FMN and iron-sulfur (Fe-S) centers, to quinones in the respiratory chain. The immediate electron acceptor for the enzyme in this species is believed to be ubiquinone. Couples the redox reaction to proton translocation (for every two electrons transferred, four hydrogen ions are translocated across the cytoplasmic membrane), and thus conserves the redox energy in a proton gradient. The protein is NADH-quinone oxidoreductase subunit K of Sphingopyxis alaskensis (strain DSM 13593 / LMG 18877 / RB2256) (Sphingomonas alaskensis).